Reading from the N-terminus, the 31-residue chain is MFTLLSYFAFLMLALTFTLALFVGLNKIQIL.

A helical membrane pass occupies residues Leu4–Gly24.

This sequence belongs to the PetL family. In terms of assembly, the 4 large subunits of the cytochrome b6-f complex are cytochrome b6, subunit IV (17 kDa polypeptide, PetD), cytochrome f and the Rieske protein, while the 4 small subunits are PetG, PetL, PetM and PetN. The complex functions as a dimer.

The protein resides in the plastid. It is found in the chloroplast thylakoid membrane. Component of the cytochrome b6-f complex, which mediates electron transfer between photosystem II (PSII) and photosystem I (PSI), cyclic electron flow around PSI, and state transitions. PetL is important for photoautotrophic growth as well as for electron transfer efficiency and stability of the cytochrome b6-f complex. The protein is Cytochrome b6-f complex subunit 6 of Adiantum capillus-veneris (Maidenhair fern).